Reading from the N-terminus, the 131-residue chain is Protein TIFY 5A (131 aa).

Positions 9–13 match the EAR motif; that stretch reads LELRL. Disordered stretches follow at residues 14 to 44 and 74 to 131; these read FPTS…EESQ and REMK…HSRR. Residues 16–34 show a composition bias toward low complexity; that stretch reads TSYDSDSSDTTSVVESTSS. A Tify domain is found at 39–74; it reads PNEESQRITIFYNGKMCFSSDVTHLQARSIISIASR. Residues 79–100 are compositionally biased toward polar residues; that stretch reads KSSSNGSDPPNKSTSFHHNQLP. The short motif at 105–127 is the Jas element; sequence SMKKSLQSFLQKRKIRIQATSPY. The Nuclear localization signal motif lies at 106–113; it reads MKKSLQSF. Positions 122-131 are enriched in polar residues; sequence QATSPYHSRR.

This sequence belongs to the TIFY/JAZ family. Interacts with TPL and weakly with COI1, but not with AFPH2/NINJA. Interacts with MYC2, MYB21, MYB24, TIFY10A/JAZ1, TIFY10B/JAZ2, TIFY6B/JAZ3, TIFY6A/JAZ4, TIFY11A/JAZ5, TIFY11B/JAZ6, TIFY7/JAZ9, TIFY9/JAZ10 and TIFY3B/JAZ12. Interacts with RHD6 and RSL1. As to quaternary structure, (Microbial infection) Interacts with the pathogenic Pseudomonas syringae HopZ1a protein. In terms of processing, (Microbial infection) Acetylated by Pseudomonas syringae HopZ1a. Ubiquitinated.

Its subcellular location is the nucleus. Functionally, repressor of jasmonate responses. Unable to associate strongly with COI1 in the presence of jasmonoyl-isoleucine (JA-Ile) and is therefore more resistant to JA-mediated-degradation than other TIFY/JAZ proteins. Repress gene expression through direct recruitment of the corepressor TOPLESS to cognate transcription factors. Interacts with and suppresses RHD6 and RSL1 transcription factor activities to negatively regulate jasmonate-stimulated root hair development. This chain is Protein TIFY 5A, found in Arabidopsis thaliana (Mouse-ear cress).